The sequence spans 163 residues: Acetolactate synthase small subunit (163 aa).

The 76-residue stretch at 4-79 (ILSVLLENES…VFKVVNLSEQ (76 aa)) folds into the ACT domain.

This sequence belongs to the acetolactate synthase small subunit family. As to quaternary structure, dimer of large and small chains.

The catalysed reaction is 2 pyruvate + H(+) = (2S)-2-acetolactate + CO2. The protein operates within amino-acid biosynthesis; L-isoleucine biosynthesis; L-isoleucine from 2-oxobutanoate: step 1/4. It participates in amino-acid biosynthesis; L-valine biosynthesis; L-valine from pyruvate: step 1/4. This is Acetolactate synthase small subunit (ilvH) from Haemophilus influenzae (strain ATCC 51907 / DSM 11121 / KW20 / Rd).